Here is a 26-residue protein sequence, read N- to C-terminus: Hemocyanin subunit B (26 aa).

The protein belongs to the tyrosinase family. Hemocyanin subfamily. As to expression, hemolymph.

The protein localises to the secreted. It localises to the extracellular space. Hemocyanins are copper-containing oxygen carriers occurring freely dissolved in the hemolymph of many mollusks and arthropods. The chain is Hemocyanin subunit B from Carcinus maenas (Common shore crab).